The chain runs to 320 residues: MPSISVRRLFDDNQYKLQLAWAAGNSGADNRIGVEADKPVLALVGHLNFIHPNQIQVVGLAESEYLNRLESGETGYQFGNLFDISMSLVIVANGLPVSPGLRDYCHKNDIPLLTSKLESPYLMDVLRIYLQRTLAASSVKHGVFLDVFEIGVLITGHSGLGKSELALELISRGHSLIADDAVELFRIGPETLEGRCSPMLRDFLEVRGLGILNIRHIFGETSIRPKKILQLIINLVEADDEYMKQLDRLSIRTETESILNVNVRSVTLPVAVGRNLAVLVEAAVRNYILQLRGKDSTREFLERHQTQLKENEQNHENRPD.

Active-site residues include H141 and K162. ATP is bound at residue 156 to 163 (GHSGLGKS). S163 is a binding site for Mg(2+). The active-site Proton acceptor; for phosphorylation activity. Proton donor; for dephosphorylation activity is the D180. The tract at residues 204–213 (LEVRGLGILN) is important for the catalytic mechanism of both phosphorylation and dephosphorylation. E205 contacts Mg(2+). R248 is a catalytic residue. An important for the catalytic mechanism of dephosphorylation region spans residues 269–274 (PVAVGR).

The protein belongs to the HPrK/P family. As to quaternary structure, homohexamer. Requires Mg(2+) as cofactor.

The catalysed reaction is [HPr protein]-L-serine + ATP = [HPr protein]-O-phospho-L-serine + ADP + H(+). The enzyme catalyses [HPr protein]-O-phospho-L-serine + phosphate + H(+) = [HPr protein]-L-serine + diphosphate. Catalyzes the ATP- as well as the pyrophosphate-dependent phosphorylation of a specific serine residue in HPr, a phosphocarrier protein of the phosphoenolpyruvate-dependent sugar phosphotransferase system (PTS). HprK/P also catalyzes the pyrophosphate-producing, inorganic phosphate-dependent dephosphorylation (phosphorolysis) of seryl-phosphorylated HPr (P-Ser-HPr). The sequence is that of HPr kinase/phosphorylase from Neisseria meningitidis serogroup C / serotype 2a (strain ATCC 700532 / DSM 15464 / FAM18).